The primary structure comprises 102 residues: MSVLARLEATIAARKGADPDSSWTAKLLAKGPEKCAEKFGEEAVEAIIEAVKGDRAKLTSEAADVLYHLLVMLAARDVALAEVLAELERREGISGISEKASR.

Belongs to the PRA-PH family.

It localises to the cytoplasm. It catalyses the reaction 1-(5-phospho-beta-D-ribosyl)-ATP + H2O = 1-(5-phospho-beta-D-ribosyl)-5'-AMP + diphosphate + H(+). It functions in the pathway amino-acid biosynthesis; L-histidine biosynthesis; L-histidine from 5-phospho-alpha-D-ribose 1-diphosphate: step 2/9. The polypeptide is Phosphoribosyl-ATP pyrophosphatase (Dinoroseobacter shibae (strain DSM 16493 / NCIMB 14021 / DFL 12)).